Here is a 395-residue protein sequence, read N- to C-terminus: THP3 homolog C2A9.11c (395 aa).

Residues 91–127 form a disordered region; the sequence is LLSEEDEVDKKEKRRRRFENGSRSQNNAKSEELKVNP. Positions 218-384 constitute a PCI domain; sequence DVGEYNQCQT…STDRFEKCMK (167 aa).

The protein belongs to the THP3 family.

Its subcellular location is the cytoplasm. The protein localises to the nucleus. In terms of biological role, required for transcription elongation. May also be involved in pre-mRNA splicing. In Schizosaccharomyces pombe (strain 972 / ATCC 24843) (Fission yeast), this protein is THP3 homolog C2A9.11c.